A 378-amino-acid polypeptide reads, in one-letter code: Holliday junction branch migration complex subunit RuvB 1 (378 aa).

A compositionally biased stretch (polar residues) spans 1–12 (MAIISSRDTGQN). The segment at 1-62 (MAIISSRDTG…PGEAQEESLR (62 aa)) is disordered. The segment at 13 to 222 (AEGPKRRQQK…FGHVQRLRFY (210 aa)) is large ATPase domain (RuvB-L). Residues Leu-61, Arg-62, Gly-103, Lys-106, Thr-107, Thr-108, 169 to 171 (EDF), Arg-212, Tyr-222, and Arg-259 each bind ATP. Thr-107 serves as a coordination point for Mg(2+). A small ATPAse domain (RuvB-S) region spans residues 223–293 (EPHELVQIVL…VAAAALELFQ (71 aa)). Residues 296 to 378 (PMGLDWIDRK…EAQSPLPLWS (83 aa)) are head domain (RuvB-H). Residues Arg-351 and Arg-356 each contribute to the DNA site.

It belongs to the RuvB family. As to quaternary structure, homohexamer. Forms an RuvA(8)-RuvB(12)-Holliday junction (HJ) complex. HJ DNA is sandwiched between 2 RuvA tetramers; dsDNA enters through RuvA and exits via RuvB. An RuvB hexamer assembles on each DNA strand where it exits the tetramer. Each RuvB hexamer is contacted by two RuvA subunits (via domain III) on 2 adjacent RuvB subunits; this complex drives branch migration. In the full resolvosome a probable DNA-RuvA(4)-RuvB(12)-RuvC(2) complex forms which resolves the HJ.

The protein localises to the cytoplasm. It carries out the reaction ATP + H2O = ADP + phosphate + H(+). The RuvA-RuvB-RuvC complex processes Holliday junction (HJ) DNA during genetic recombination and DNA repair, while the RuvA-RuvB complex plays an important role in the rescue of blocked DNA replication forks via replication fork reversal (RFR). RuvA specifically binds to HJ cruciform DNA, conferring on it an open structure. The RuvB hexamer acts as an ATP-dependent pump, pulling dsDNA into and through the RuvAB complex. RuvB forms 2 homohexamers on either side of HJ DNA bound by 1 or 2 RuvA tetramers; 4 subunits per hexamer contact DNA at a time. Coordinated motions by a converter formed by DNA-disengaged RuvB subunits stimulates ATP hydrolysis and nucleotide exchange. Immobilization of the converter enables RuvB to convert the ATP-contained energy into a lever motion, pulling 2 nucleotides of DNA out of the RuvA tetramer per ATP hydrolyzed, thus driving DNA branch migration. The RuvB motors rotate together with the DNA substrate, which together with the progressing nucleotide cycle form the mechanistic basis for DNA recombination by continuous HJ branch migration. Branch migration allows RuvC to scan DNA until it finds its consensus sequence, where it cleaves and resolves cruciform DNA. The sequence is that of Holliday junction branch migration complex subunit RuvB 1 from Synechococcus sp. (strain JA-3-3Ab) (Cyanobacteria bacterium Yellowstone A-Prime).